Here is a 315-residue protein sequence, read N- to C-terminus: Calcium homeostasis modulator protein 6 (315 aa).

Residues methionine 1–glycine 21 lie on the Cytoplasmic side of the membrane. The helical transmembrane segment at leucine 22–valine 37 threads the bilayer. Residues alanine 38–alanine 46 lie on the Extracellular side of the membrane. 3 disulfides stabilise this stretch: cysteine 41-cysteine 126, cysteine 43-cysteine 155, and cysteine 139-cysteine 146. A helical membrane pass occupies residues tryptophan 47–tyrosine 68. At valine 69 to isoleucine 102 the chain is on the cytoplasmic side. Residues serine 103 to alanine 127 form a helical membrane-spanning segment. Residues alanine 128–aspartate 169 are Extracellular-facing. A helical membrane pass occupies residues leucine 170–phenylalanine 192. At threonine 193–leucine 315 the chain is on the cytoplasmic side.

The protein belongs to the CALHM family. Oligomerizes to form decameric and undecameric channels. In terms of processing, N-glycosylated. In terms of tissue distribution, placenta.

Its subcellular location is the cell membrane. It catalyses the reaction ATP(in) = ATP(out). Pore-forming subunit of an ATP-permeable channel. In response to pathogen-derived and proinflammatory stimuli, relocates from intracellular compartments to NK-dendritic cell and NK-macrophage immune synapses where it mediates ATP efflux and NK cell activation involved in antimicrobial and antitumor responses. May assemble to form gap junction channel-like structures with gating and ion conductance likely regulated by membrane lipids and voltage rather than by extracellular calcium levels. In Homo sapiens (Human), this protein is Calcium homeostasis modulator protein 6.